The following is a 104-amino-acid chain: Nucleoid-associated protein GAU_1113 (104 aa).

Belongs to the YbaB/EbfC family. As to quaternary structure, homodimer.

Its subcellular location is the cytoplasm. It localises to the nucleoid. Functionally, binds to DNA and alters its conformation. May be involved in regulation of gene expression, nucleoid organization and DNA protection. The protein is Nucleoid-associated protein GAU_1113 of Gemmatimonas aurantiaca (strain DSM 14586 / JCM 11422 / NBRC 100505 / T-27).